Consider the following 552-residue polypeptide: Arginine--tRNA ligase (552 aa).

The short motif at 123 to 133 is the 'HIGH' region element; the sequence is ANPTGPLTIGR.

The protein belongs to the class-I aminoacyl-tRNA synthetase family. Monomer.

The protein localises to the cytoplasm. It carries out the reaction tRNA(Arg) + L-arginine + ATP = L-arginyl-tRNA(Arg) + AMP + diphosphate. This Chlorobium luteolum (strain DSM 273 / BCRC 81028 / 2530) (Pelodictyon luteolum) protein is Arginine--tRNA ligase.